Here is a 201-residue protein sequence, read N- to C-terminus: MGCSPSKEGNGSFSSTSTSFIHGSESHPEYDMLLKILVIGDSGVGKSCMLLRFADNRFTDSYISTIGVDFCIRTIELDGKKIKLQIWDTAGQERFKTITTSYYRGAHGLIIVYDITSMDSFNSIKRWLIDVDRFASPSVLKLIVGNKCDLNSKRAVDFKIAKKFADELNIPIMETSAKESTAIDEAFIKLASDIKKSTPQK.

The disordered stretch occupies residues 1 to 20 (MGCSPSKEGNGSFSSTSTSF). G2 is lipidated: N-myristoyl glycine. C3 carries the S-palmitoyl cysteine lipid modification. Residues 40-48 (GDSGVGKSC), 58-65 (FTDSYIST), 88-92 (DTAGQ), 146-149 (NKCD), and 176-178 (SAK) each bind GTP. Residues 62–70 (YISTIGVDF) carry the Effector region motif.

The protein belongs to the small GTPase superfamily. Rab family. In terms of processing, although this sequence lacks the C-terminal cysteine motifs subject to isoprenylation in other Rab proteins, it does have N-terminal myristoylation and S-palmitoylation sequence motifs.

In Dictyostelium discoideum (Social amoeba), this protein is Ras-related protein Rab-1C (Rab1C).